The chain runs to 775 residues: Beta-galactosidase 7 (775 aa).

Positions 1–17 (MRGGMAITAALVVVAAA) are cleaved as a signal peptide. E185 (proton donor) is an active-site residue. E256 functions as the Nucleophile in the catalytic mechanism. N-linked (GlcNAc...) asparagine glycosylation is found at N257, N266, N277, N358, and N602. In terms of domain architecture, SUEL-type lectin spans 689-775 (RGKVPKVRIW…KSLLVVADCR (87 aa)).

It belongs to the glycosyl hydrolase 35 family.

The protein resides in the secreted. It localises to the extracellular space. Its subcellular location is the apoplast. The catalysed reaction is Hydrolysis of terminal non-reducing beta-D-galactose residues in beta-D-galactosides.. The protein is Beta-galactosidase 7 of Oryza sativa subsp. japonica (Rice).